A 178-amino-acid polypeptide reads, in one-letter code: Nucleoplasmin-3 (178 aa).

Residue Ala2 is modified to N-acetylalanine. Residues Ser13 and Ser16 each carry the phosphoserine modification. Position 27 is an omega-N-methylarginine (Arg27). The disordered stretch occupies residues 141–178; that stretch reads TMSNDVSEEESEEEEEDSDEEEVELCPILPAKKQGGRP. Over residues 146 to 164 the composition is skewed to acidic residues; sequence VSEEESEEEEEDSDEEEVE. Phosphoserine is present on residues Ser147, Ser151, and Ser158.

The protein belongs to the nucleoplasmin family. In terms of assembly, interacts with NPM (via N-terminus). Forms a pentamer with NPM at a ratio 4:1 (NPM3/NPM). Two pentamers form a decamer. Post-translationally, phosphorylated. In terms of tissue distribution, ubiquitous.

Its subcellular location is the nucleus. It is found in the nucleolus. Functionally, plays a role in the regulation of diverse cellular processes such as ribosome biogenesis, chromatin remodeling or protein chaperoning. Modulates the histone chaperone function and the RNA-binding activity of nucleolar phosphoprotein B23/NPM. Efficiently mediates chromatin remodeling when included in a pentamer containing NPM3 and NPM. The protein is Nucleoplasmin-3 (NPM3) of Homo sapiens (Human).